The sequence spans 256 residues: 2-C-methyl-D-erythritol 4-phosphate cytidylyltransferase (256 aa).

It belongs to the IspD/TarI cytidylyltransferase family. IspD subfamily.

It carries out the reaction 2-C-methyl-D-erythritol 4-phosphate + CTP + H(+) = 4-CDP-2-C-methyl-D-erythritol + diphosphate. It functions in the pathway isoprenoid biosynthesis; isopentenyl diphosphate biosynthesis via DXP pathway; isopentenyl diphosphate from 1-deoxy-D-xylulose 5-phosphate: step 2/6. In terms of biological role, catalyzes the formation of 4-diphosphocytidyl-2-C-methyl-D-erythritol from CTP and 2-C-methyl-D-erythritol 4-phosphate (MEP). This chain is 2-C-methyl-D-erythritol 4-phosphate cytidylyltransferase, found in Corynebacterium glutamicum (strain ATCC 13032 / DSM 20300 / JCM 1318 / BCRC 11384 / CCUG 27702 / LMG 3730 / NBRC 12168 / NCIMB 10025 / NRRL B-2784 / 534).